The following is a 499-amino-acid chain: Glutamate--tRNA ligase (499 aa).

Positions 12-22 (PSPTGHLHIGN) match the 'HIGH' region motif. A 'KMSKS' region motif is present at residues 259 to 263 (KLSKR). Lysine 262 provides a ligand contact to ATP.

Belongs to the class-I aminoacyl-tRNA synthetase family. Glutamate--tRNA ligase type 1 subfamily. In terms of assembly, monomer.

It is found in the cytoplasm. The catalysed reaction is tRNA(Glu) + L-glutamate + ATP = L-glutamyl-tRNA(Glu) + AMP + diphosphate. Its function is as follows. Catalyzes the attachment of glutamate to tRNA(Glu) in a two-step reaction: glutamate is first activated by ATP to form Glu-AMP and then transferred to the acceptor end of tRNA(Glu). The polypeptide is Glutamate--tRNA ligase (Lactobacillus johnsonii (strain CNCM I-12250 / La1 / NCC 533)).